Here is a 274-residue protein sequence, read N- to C-terminus: NH(3)-dependent NAD(+) synthetase (274 aa).

46–53 is an ATP binding site; it reads GISGGQDS. Asp-52 lines the Mg(2+) pocket. A deamido-NAD(+)-binding site is contributed by Arg-140. Thr-160 is an ATP binding site. Residue Glu-165 participates in Mg(2+) binding. Positions 173 and 180 each coordinate deamido-NAD(+). Positions 189 and 211 each coordinate ATP. Deamido-NAD(+) is bound at residue 260-261; sequence HK.

The protein belongs to the NAD synthetase family. Homodimer.

It carries out the reaction deamido-NAD(+) + NH4(+) + ATP = AMP + diphosphate + NAD(+) + H(+). It participates in cofactor biosynthesis; NAD(+) biosynthesis; NAD(+) from deamido-NAD(+) (ammonia route): step 1/1. In terms of biological role, catalyzes the ATP-dependent amidation of deamido-NAD to form NAD. Uses ammonia as a nitrogen source. This chain is NH(3)-dependent NAD(+) synthetase, found in Streptococcus pneumoniae serotype 2 (strain D39 / NCTC 7466).